Reading from the N-terminus, the 234-residue chain is Short neuropeptide F (234 aa).

A signal peptide spans 1–22 (MYRINLTTFTLLLVLAVGSLMS). A propeptide spanning residues 23 to 56 (ESLHPSDGAINDLYEYLLQREYAAPVSYADHQIK) is cleaved from the precursor. Phe69 and Phe101 each carry phenylalanine amide. A Tryptophan amide modification is found at Trp132. Phe165 bears the Phenylalanine amide mark. The segment covering 181–190 (TTGQQAQPAN) has biased composition (polar residues). Positions 181-234 (TTGQQAQPANEASEKRAPTQRLRWGRSDPALAKDSSEDKALDVEESENTNADDK) are disordered. Trp204 bears the Tryptophan amide mark. Residues 207–234 (SDPALAKDSSEDKALDVEESENTNADDK) constitute a propeptide that is removed on maturation.

The protein belongs to the NPY family. In terms of tissue distribution, expressed in all body parts of larva, pupae and adults.

It is found in the secreted. Plays a role in controlling food intake and regulating body size. This is Short neuropeptide F from Anopheles gambiae (African malaria mosquito).